The primary structure comprises 120 residues: NAD(P)H-quinone oxidoreductase subunit 3, chloroplastic (120 aa).

The next 3 membrane-spanning stretches (helical) occupy residues leucine 14–isoleucine 34, methionine 64–methionine 84, and valine 88–serine 108.

Belongs to the complex I subunit 3 family. As to quaternary structure, NDH is composed of at least 16 different subunits, 5 of which are encoded in the nucleus.

Its subcellular location is the plastid. It is found in the chloroplast thylakoid membrane. The catalysed reaction is a plastoquinone + NADH + (n+1) H(+)(in) = a plastoquinol + NAD(+) + n H(+)(out). The enzyme catalyses a plastoquinone + NADPH + (n+1) H(+)(in) = a plastoquinol + NADP(+) + n H(+)(out). In terms of biological role, NDH shuttles electrons from NAD(P)H:plastoquinone, via FMN and iron-sulfur (Fe-S) centers, to quinones in the photosynthetic chain and possibly in a chloroplast respiratory chain. The immediate electron acceptor for the enzyme in this species is believed to be plastoquinone. Couples the redox reaction to proton translocation, and thus conserves the redox energy in a proton gradient. The sequence is that of NAD(P)H-quinone oxidoreductase subunit 3, chloroplastic from Cicer arietinum (Chickpea).